Here is a 235-residue protein sequence, read N- to C-terminus: Ribitol-5-phosphate cytidylyltransferase (235 aa).

Residues 7 to 10 (LAGG), 82 to 88 (GADRNTS), and serine 113 each bind CTP.

Belongs to the IspD/TarI cytidylyltransferase family. TarI subfamily.

It catalyses the reaction D-ribitol 5-phosphate + CTP + H(+) = CDP-L-ribitol + diphosphate. Its pathway is cell wall biogenesis; poly(ribitol phosphate) teichoic acid biosynthesis. In terms of biological role, catalyzes the transfer of the cytidylyl group of CTP to D-ribitol 5-phosphate. This chain is Ribitol-5-phosphate cytidylyltransferase, found in Streptococcus pneumoniae serotype 2 (strain D39 / NCTC 7466).